The primary structure comprises 383 residues: Seipin (383 aa).

Topologically, residues 1-27 are cytoplasmic; that stretch reads MVNDPPVPALLWAQEVGHVLAGRARRL. A helical membrane pass occupies residues 28-48; it reads MLQFGVLFCTILLLLWVSVFL. The Lumenal portion of the chain corresponds to 49–242; it reads YGSFYYSYMP…TCAFVGVASN (194 aa). N-linked (GlcNAc...) asparagine glycans are attached at residues Asn88 and Asn242. A helical membrane pass occupies residues 243-263; sequence FTFLSVIVLFSYMQWVWGAVW. Topologically, residues 264 to 383 are cytoplasmic; sequence PRHRFSLQVN…LRQRPTCSSS (120 aa). Residues 279-383 are disordered; sequence NSHHGAPRRI…LRQRPTCSSS (105 aa). Phosphoserine is present on Ser289. Residues 292–302 are compositionally biased toward polar residues; the sequence is QPGQESTQQSD. Over residues 322–332 the composition is skewed to basic and acidic residues; sequence EEEKPEKRPLN. 2 positions are modified to phosphoserine: Ser342 and Ser345. Residues 353–371 are compositionally biased toward low complexity; the sequence is TEANPPTSASASALAPETL.

Belongs to the seipin family. Undecamer (an oligomer having eleven subunits). Oligomerization is important for its function in lipid droplet formation. Interacts with LDAF1 to form an oligomeric complex. Interacts with RAB18. Interacts with ZFYVE1 in a RAB18-dependent manner. As to expression, expressed in the paraventricular nucleus of the hypothalamus (PVN) and brainstem dorsal vagal complex (DVC) in oxytocin and catecholaminergic neurons (at protein level). Highest expression detected in subcutaneous and epididymal white adipose tissue, brown adipose tissue and testis. Also expressed in brain, skeletal muscle and adrenal gland, with lower levels detected in liver, heart, kidney, spleen, lung and small intestine. In brain, detected in piriform cortex, olfactory tubercle, islands of Calleja, lateral septal nucleus, medial septal nucleus, nucleus of the vertical limb of the diagonal band, nucleus of the horizontal limb of the diagonal band, preoptic area, paraventricular thalamic nucleus, lateral globus pallidus, supraoptic nucleus, suprachiasmatic nucleus, subfornical organ, paraventricular nucleus of the hypothalamus, zona incerta, dorsomedial nucleus of the hypothalamus, ventromedial nucleus of the hypothalamus, arcuate nucleus of the hypothalamus, basomedial amygdaloid nucleus, medial amygdaloid nucleus, medial habenular, pyramidal cell layer of the hippocampus, granular layer of the dentate gyrus, posterior hypothalamus, supramammilliary nucleus, premammillary nucleus, nucleus of Darkschewitsch, Edinger-Westphal nucleus, ventral tegmental area, dorsal raphe nucleus, periaqueductal gray, median raphe nucleus, lateral parabrachial nucleus, dorsal tegmental nucleus, laterodorsal tegmental nucleus, locus coeruleus, Barrington's nucleus, medial vestibular nucleus, ambiguous nucleus, dorsal vagal complex and hypoglossal nucleus.

It localises to the endoplasmic reticulum membrane. It is found in the lipid droplet. Its function is as follows. Plays a crucial role in the formation of lipid droplets (LDs) which are storage organelles at the center of lipid and energy homeostasis. In association with LDAF1, defines the sites of LD formation in the ER. Also required for growth and maturation of small nascent LDs into larger mature LDs. Mediates the formation and/or stabilization of endoplasmic reticulum-lipid droplets (ER-LD) contacts, facilitating protein and lipid delivery from the ER into growing LDs. Regulates the maturation of ZFYVE1-positive nascent LDs and the function of the RAB18-ZFYVE1 complex in mediating the formation of ER-LD contacts. Binds anionic phospholipids including phosphatidic acid. Plays an important role in the differentiation and development of adipocytes. This is Seipin from Mus musculus (Mouse).